Reading from the N-terminus, the 433-residue chain is 23S rRNA (uracil(1939)-C(5))-methyltransferase RlmD (433 aa).

A TRAM domain is found at 10–68 (RTTTRQIITVSVNDLDSFGQGVARHNGKTLFIPGLLPQENAEVTVTEDKKQYARAKVVR). Residues Cys-81, Cys-87, Cys-90, and Cys-162 each coordinate [4Fe-4S] cluster. 6 residues coordinate S-adenosyl-L-methionine: Gln-265, Phe-294, Asn-299, Glu-315, Asn-342, and Asp-363. Residue Cys-389 is the Nucleophile of the active site.

This sequence belongs to the class I-like SAM-binding methyltransferase superfamily. RNA M5U methyltransferase family. RlmD subfamily.

The enzyme catalyses uridine(1939) in 23S rRNA + S-adenosyl-L-methionine = 5-methyluridine(1939) in 23S rRNA + S-adenosyl-L-homocysteine + H(+). Catalyzes the formation of 5-methyl-uridine at position 1939 (m5U1939) in 23S rRNA. This is 23S rRNA (uracil(1939)-C(5))-methyltransferase RlmD from Escherichia coli (strain UTI89 / UPEC).